We begin with the raw amino-acid sequence, 460 residues long: Cysteine--tRNA ligase (460 aa).

C28 contacts Zn(2+). The short motif at 30–40 (MTVYDYCHLGH) is the 'HIGH' region element. Zn(2+)-binding residues include C209, H234, and E238. Positions 266–270 (KMSKS) match the 'KMSKS' region motif. An ATP-binding site is contributed by K269.

Belongs to the class-I aminoacyl-tRNA synthetase family. As to quaternary structure, monomer. Requires Zn(2+) as cofactor.

The protein localises to the cytoplasm. The catalysed reaction is tRNA(Cys) + L-cysteine + ATP = L-cysteinyl-tRNA(Cys) + AMP + diphosphate. The protein is Cysteine--tRNA ligase of Pseudomonas savastanoi pv. phaseolicola (strain 1448A / Race 6) (Pseudomonas syringae pv. phaseolicola (strain 1448A / Race 6)).